Consider the following 283-residue polypeptide: NAD kinase (283 aa).

Residue Asp-66 is the Proton acceptor of the active site. NAD(+) contacts are provided by residues 66–67 (DG), Arg-71, 137–138 (ND), His-165, Asp-167, and 178–183 (TGYSMS).

It belongs to the NAD kinase family. The cofactor is a divalent metal cation.

It localises to the cytoplasm. The enzyme catalyses NAD(+) + ATP = ADP + NADP(+) + H(+). Involved in the regulation of the intracellular balance of NAD and NADP, and is a key enzyme in the biosynthesis of NADP. Catalyzes specifically the phosphorylation on 2'-hydroxyl of the adenosine moiety of NAD to yield NADP. In Agathobacter rectalis (strain ATCC 33656 / DSM 3377 / JCM 17463 / KCTC 5835 / VPI 0990) (Eubacterium rectale), this protein is NAD kinase.